The sequence spans 418 residues: Ceramide synthase LAC1 (418 aa).

Residues 1-14 (MSTIKPSPSNNNLK) are compositionally biased toward polar residues. The interval 1-25 (MSTIKPSPSNNNLKVRSRPRRKSSI) is disordered. Ser-2 bears the N-acetylserine mark. At 2–81 (STIKPSPSNN…WFSFREISYR (80 aa)) the chain is on the cytoplasmic side. Basic residues predominate over residues 15 to 24 (VRSRPRRKSS). Residues Ser-23 and Ser-24 each carry the phosphoserine modification. Residues 82 to 102 (HAWIAPLMILIAVYSAYFTSG) form a helical membrane-spanning segment. Asn-103 carries an N-linked (GlcNAc...) asparagine glycan. The Lumenal segment spans residues 103–130 (NTTKTNVLHRFVAVSYQIGDTNAYGKGI). The helical transmembrane segment at 131 to 155 (NDLCFVFYYMIFFTFLREFLMDVVI) threads the bilayer. The Cytoplasmic portion of the chain corresponds to 156 to 172 (RPFAIRLHVTSKHRIKR). In terms of domain architecture, TLC spans 168–385 (HRIKRIMEQM…FRVLYRILWR (218 aa)). Fumonisin B1-binding residues include Arg-169, Arg-172, and Tyr-182. A helical membrane pass occupies residues 173 to 194 (IMEQMYAIFYTGVSGPFGIYCM). The Lumenal portion of the chain corresponds to 195–217 (YHSDLWFFNTKAMYRTYPDFTNP). The chain crosses the membrane as a helical span at residues 218-240 (FLFKVFYLGQAAFWAQQACILVL). Hexacosanoate contacts are provided by Tyr-224 and Trp-231. Trp-231 is a fumonisin B1 binding site. Residue Trp-231 participates in hexacosanoyl-CoA binding. Over 241–249 (QLEKPRKDH) the chain is Cytoplasmic. Residues 250 to 268 (NELTFHHIVTLLLIWSSYV) form a helical membrane-spanning segment. His-255 lines the fumonisin B1 pocket. Residues His-255, Thr-259, Leu-262, Ile-263, Ser-265, Ser-266, Phe-269, Phe-271, Met-274, Gly-275, Ile-278, Tyr-279, Met-282, Asp-283, and Asp-286 each contribute to the hexacosanoate site. His-255, Thr-259, and Leu-262 together coordinate hexacosanoyl-CoA. Hexacosanoyl-CoA is bound by residues Ser-265 and Ser-266. Over 269-273 (FHFTK) the chain is Lumenal. Hexacosanoyl-CoA contacts are provided by Phe-271, Met-274, Gly-275, Ile-278, Tyr-279, and Met-282. A helical transmembrane segment spans residues 274 to 295 (MGLPIYITMDVSDFLLSFSKTL). Residues Asp-286, Leu-289, Lys-293, Asn-296, Tyr-297, Ala-303, Phe-304, Phe-307, and Trp-314 each coordinate fumonisin B1. 4 residues coordinate hexacosanoyl-CoA: Asp-286, Leu-289, Lys-293, and Asn-296. The Cytoplasmic segment spans residues 296–305 (NYLDSGLAFF). Residues 306–334 (SFAIFVVAWIYLRHYINLKILWSVLTQFR) form a helical membrane-spanning segment. Phe-307 is a hexacosanoyl-CoA binding site. 10 residues coordinate hexacosanoate: Arg-318, Phe-343, Tyr-348, Ile-352, Ser-353, Ile-356, Val-357, Leu-360, Ile-361, and Trp-371. Arg-318 provides a ligand contact to hexacosanoyl-CoA. The Lumenal segment spans residues 335 to 353 (TEGNYVLNFATQQYKCWIS). The hexacosanoyl-CoA site is built by Tyr-348, Ile-352, Ser-353, Ile-356, Val-357, and Leu-360. A helical transmembrane segment spans residues 354-382 (LPIVFVLIGALQLVNLYWLFLIFRVLYRI). Fumonisin B1-binding residues include Trp-371, Ile-375, Val-378, Ile-382, and Arg-385. Trp-371 serves as a coordination point for hexacosanoyl-CoA. At 383–418 (LWRGILKDDRSDSESDEESDESSTTPTDSTPTKKDI) the chain is on the cytoplasmic side. Positions 390–418 (DDRSDSESDEESDESSTTPTDSTPTKKDI) are disordered.

It belongs to the sphingosine N-acyltransferase family. As to quaternary structure, component of the ceramide synthase complex composed of at least LAC1, LAG1 and LIP1. Forms a heterotetrameric complex, where one unit of the LIP1 homodimer interacts with LAC1 and the other with either LAC1 or LAG1. In terms of processing, phosphorylated; phosphorylation is induced upon disruption of sphingolipid synthesis. Phosphorylation is inhibited by exogenous addition of phytosphingosine.

It localises to the endoplasmic reticulum membrane. The catalysed reaction is a very long-chain fatty acyl-CoA + a sphingoid base = an N-(very-long-chain fatty acyl)-sphingoid base + CoA + H(+). It catalyses the reaction hexacosanoyl-CoA + sphinganine = N-hexacosanoylsphinganine + CoA + H(+). It carries out the reaction eicosanoyl-CoA + sphinganine = N-eicosanoylsphinganine + CoA + H(+). The enzyme catalyses a fatty acyl-CoA + sphinganine = an N-acylsphinganine + CoA + H(+). The catalysed reaction is (4R)-hydroxysphinganine + a fatty acyl-CoA = an N-acyl-(4R)-4-hydroxysphinganine + CoA + H(+). Its pathway is lipid metabolism; sphingolipid metabolism. As part of the ceramide synthase complex, inhibited by the sphinganine analog mycotoxin, fumonisin B1 (FB1). Activated by ACB1, as part of the ceramide synthase complex. Its function is as follows. Component of the ceramide synthase complex that catalyzes the transfer of the acyl chain from acyl-CoA to a sphingoid base, with high selectivity toward hexacosanoyl-CoA (C26:0-CoA). N-acylates sphinganine and phytosphingosine bases to form dihydroceramides and phytoceramides, respectively. Redundant with LAG1. Facilitates ER-to-Golgi transport of GPI-anchored proteins. Has a lower affinity for phytosphingosine (PHS) than dihydrosphingosine (DHS); PHS is required for the synthesis of phytoceramides and the formation of nuclear envelopes. Along with LAG1, plays a role in pheromone-induced MAP kinase-activation of mating and formation of diploid cells. May also play a role, together with LAG1, in the polarized membrane distribution of phosphatidylinositol 4,5 biphosphate required for STE5 localization to the plasma membrane. The sequence is that of Ceramide synthase LAC1 (LAC1) from Saccharomyces cerevisiae (strain ATCC 204508 / S288c) (Baker's yeast).